The following is a 946-amino-acid chain: DNA primase (946 aa).

A disordered region spans residues Arg-596–Thr-626. Positions Phe-617 to Thr-626 are enriched in polar residues. Residues Cys-881–Cys-920 form a CHC2-type zinc finger.

This sequence belongs to the herpesviridae DNA primase family. In terms of assembly, associates with the helicase and the primase-associated factor to form the helicase-primase factor.

It localises to the host nucleus. Functionally, essential component of the helicase/primase complex. Unwinds the DNA at the replication forks and generates single-stranded DNA for both leading and lagging strand synthesis. The primase initiates primer synthesis and thereby produces large amount of short RNA primers on the lagging strand that the polymerase elongates using dNTPs. The polypeptide is DNA primase (UL70) (Human cytomegalovirus (strain AD169) (HHV-5)).